Reading from the N-terminus, the 537-residue chain is ATP synthase subunit beta 1 (537 aa).

164-171 (GGAGVGKT) contacts ATP. Residues 471-537 (PKQSATEKNS…ESLEEPQNGR (67 aa)) form a disordered region. 2 stretches are compositionally biased toward polar residues: residues 473 to 498 (QSAT…SPGP) and 507 to 528 (IPSS…AQNE).

Belongs to the ATPase alpha/beta chains family. F-type ATPases have 2 components, CF(1) - the catalytic core - and CF(0) - the membrane proton channel. CF(1) has five subunits: alpha(3), beta(3), gamma(1), delta(1), epsilon(1). CF(0) has three main subunits: a(1), b(2) and c(9-12). The alpha and beta chains form an alternating ring which encloses part of the gamma chain. CF(1) is attached to CF(0) by a central stalk formed by the gamma and epsilon chains, while a peripheral stalk is formed by the delta and b chains.

It localises to the cell inner membrane. The catalysed reaction is ATP + H2O + 4 H(+)(in) = ADP + phosphate + 5 H(+)(out). Functionally, produces ATP from ADP in the presence of a proton gradient across the membrane. The catalytic sites are hosted primarily by the beta subunits. The protein is ATP synthase subunit beta 1 of Pseudoalteromonas atlantica (strain T6c / ATCC BAA-1087).